We begin with the raw amino-acid sequence, 741 residues long: Transketolase, chloroplastic (741 aa).

Residues 1–19 (MAASSSLSTLSHHQTLLSH) are compositionally biased toward low complexity. Positions 1–33 (MAASSSLSTLSHHQTLLSHPKTHLPTTPASSLL) are disordered. The transit peptide at 1 to 66 (MAASSSLSTL…VGSASAVVRA (66 aa)) directs the protein to the chloroplast. Over residues 24–33 (LPTTPASSLL) the composition is skewed to polar residues. His103 contributes to the substrate binding site. Residues His143 and 192-194 (GPL) contribute to the thiamine diphosphate site. Asp233 lines the Mg(2+) pocket. 2 residues coordinate thiamine diphosphate: Gly234 and Asn263. Asn263 and Ile265 together coordinate Mg(2+). Residues His340, Arg434, and Ser461 each coordinate substrate. Residue His340 coordinates thiamine diphosphate. Thiamine diphosphate is bound by residues Glu488 and Phe515. Catalysis depends on Glu488, which acts as the Proton donor. Positions 539, 547, and 598 each coordinate substrate.

This sequence belongs to the transketolase family. Homodimer. Mg(2+) serves as cofactor. Requires Ca(2+) as cofactor. It depends on Mn(2+) as a cofactor. The cofactor is Co(2+). Thiamine diphosphate is required as a cofactor.

The protein resides in the plastid. The protein localises to the chloroplast thylakoid membrane. It carries out the reaction D-sedoheptulose 7-phosphate + D-glyceraldehyde 3-phosphate = aldehydo-D-ribose 5-phosphate + D-xylulose 5-phosphate. It participates in carbohydrate biosynthesis; Calvin cycle. In terms of biological role, catalyzes the reversible transfer of a two-carbon ketol group from fructose-6-phosphate or sedoheptulose-7-phosphate to glyceraldehyde-3-phosphate to yield xylulose-5-phosphate and erythrose-4-phosphate or ribose-5-phosphate, respectively. This Spinacia oleracea (Spinach) protein is Transketolase, chloroplastic.